The following is a 69-amino-acid chain: Large ribosomal subunit protein bL31 (69 aa).

Residues Cys16, Cys18, Cys37, and Cys40 each coordinate Zn(2+).

The protein belongs to the bacterial ribosomal protein bL31 family. Type A subfamily. Part of the 50S ribosomal subunit. The cofactor is Zn(2+).

Functionally, binds the 23S rRNA. In Buchnera aphidicola subsp. Cinara cedri (strain Cc), this protein is Large ribosomal subunit protein bL31.